A 290-amino-acid polypeptide reads, in one-letter code: MDTTTTMAPLPLLTTTSLLLFFFLASSFAADVVVAGGGGGGGGYDGGGDGEGGGGGDGEGGGGGGGAKMPHVNHGRYKCGPWVDGHATFYGGRDASGTTEGGACGYKDADGYGAMTAAVSPALFDNGAGCGACYELKGDSGKTVVVTATNQAPPPVNGMKGEHFDLTMPAFLSIAEEKLGVVPVSYRKVACVRQGGIKYTITGNPSYNMVMVKNVGGAGDVVKLTVKGTKRVKWTPLQRSWGQLWKTEANLTGESLTFRVMTGDHRKATSWRVAPRDWTYDNTYQAKKNF.

Residues 1–29 form the signal peptide; the sequence is MDTTTTMAPLPLLTTTSLLLFFFLASSFA. Residues 45 to 67 form a disordered region; that stretch reads DGGGDGEGGGGGDGEGGGGGGGA. Residues 101–196 enclose the Expansin-like EG45 domain; sequence GGACGYKDAD…RKVACVRQGG (96 aa). The Expansin-like CBD domain maps to 206-286; the sequence is SYNMVMVKNV…DWTYDNTYQA (81 aa). N-linked (GlcNAc...) asparagine glycosylation occurs at Asn-250.

The protein belongs to the expansin family. Expansin A subfamily. Expressed in flowers.

It localises to the secreted. The protein localises to the cell wall. Its subcellular location is the membrane. Its function is as follows. May cause loosening and extension of plant cell walls by disrupting non-covalent bonding between cellulose microfibrils and matrix glucans. No enzymatic activity has been found. May be required for rapid internodal elongation in deepwater rice during submergence. In Oryza sativa subsp. japonica (Rice), this protein is Expansin-A26 (EXPA26).